Consider the following 60-residue polypeptide: Large ribosomal subunit protein bL32c (60 aa).

Belongs to the bacterial ribosomal protein bL32 family.

It is found in the plastid. It localises to the chloroplast. The chain is Large ribosomal subunit protein bL32c from Psilotum nudum (Whisk fern).